The primary structure comprises 289 residues: D-alanine aminotransferase (289 aa).

Tyrosine 31 serves as a coordination point for substrate. Residue arginine 50 participates in pyridoxal 5'-phosphate binding. Residues arginine 99 and histidine 101 each coordinate substrate. The residue at position 147 (lysine 147) is an N6-(pyridoxal phosphate)lysine. Glutamate 179 lines the pyridoxal 5'-phosphate pocket.

Belongs to the class-IV pyridoxal-phosphate-dependent aminotransferase family. As to quaternary structure, homodimer. It depends on pyridoxal 5'-phosphate as a cofactor.

It carries out the reaction D-alanine + 2-oxoglutarate = D-glutamate + pyruvate. Functionally, acts on the D-isomers of alanine, leucine, aspartate, glutamate, aminobutyrate, norvaline and asparagine. The enzyme transfers an amino group from a substrate D-amino acid to the pyridoxal phosphate cofactor to form pyridoxamine and an alpha-keto acid in the first half-reaction. The second half-reaction is the reverse of the first, transferring the amino group from the pyridoxamine to a second alpha-keto acid to form the product D-amino acid via a ping-pong mechanism. This is an important process in the formation of D-alanine and D-glutamate, which are essential bacterial cell wall components. The protein is D-alanine aminotransferase (dat) of Listeria monocytogenes serotype 1/2a (strain 10403S).